The sequence spans 185 residues: Elongation factor P (185 aa).

This sequence belongs to the elongation factor P family.

The protein resides in the cytoplasm. It participates in protein biosynthesis; polypeptide chain elongation. Functionally, involved in peptide bond synthesis. Stimulates efficient translation and peptide-bond synthesis on native or reconstituted 70S ribosomes in vitro. Probably functions indirectly by altering the affinity of the ribosome for aminoacyl-tRNA, thus increasing their reactivity as acceptors for peptidyl transferase. The sequence is that of Elongation factor P from Finegoldia magna (strain ATCC 29328 / DSM 20472 / WAL 2508) (Peptostreptococcus magnus).